The following is a 289-amino-acid chain: Protoheme IX farnesyltransferase 2 (289 aa).

Helical transmembrane passes span leucine 13–serine 33, isoleucine 37–phenylalanine 57, leucine 86–leucine 106, valine 109–leucine 129, isoleucine 137–glycine 157, valine 159–tryptophan 179, glutamate 207–isoleucine 227, valine 232–alanine 252, and alanine 267–valine 287.

It belongs to the UbiA prenyltransferase family. Protoheme IX farnesyltransferase subfamily.

Its subcellular location is the cell membrane. It catalyses the reaction heme b + (2E,6E)-farnesyl diphosphate + H2O = Fe(II)-heme o + diphosphate. The protein operates within porphyrin-containing compound metabolism; heme O biosynthesis; heme O from protoheme: step 1/1. In terms of biological role, converts heme B (protoheme IX) to heme O by substitution of the vinyl group on carbon 2 of heme B porphyrin ring with a hydroxyethyl farnesyl side group. The polypeptide is Protoheme IX farnesyltransferase 2 (Picrophilus torridus (strain ATCC 700027 / DSM 9790 / JCM 10055 / NBRC 100828 / KAW 2/3)).